A 348-amino-acid chain; its full sequence is Bifunctional nitrilase/nitrile hydratase NIT4B (348 aa).

The CN hydrolase domain maps to 29-300 (VRATVVQAST…EALISADLDL (272 aa)). Glutamate 69 (proton acceptor) is an active-site residue. The active-site Proton donor is lysine 156. Cysteine 190 acts as the Nucleophile in catalysis.

The protein belongs to the carbon-nitrogen hydrolase superfamily. Nitrilase family. Expressed in roots, stems, cotyledons, leaves and flowers.

The catalysed reaction is a nitrile + 2 H2O = a carboxylate + NH4(+). It carries out the reaction 3-cyano-L-alanine + 2 H2O = L-aspartate + NH4(+). In terms of biological role, highly specific for beta-cyano-L-alanine (Ala(CN)). Low activity with 3-phenylpropionitrile (PPN). Not associated with auxin production but may be involved in cyanide detoxification. This is Bifunctional nitrilase/nitrile hydratase NIT4B (NIT4B) from Nicotiana tabacum (Common tobacco).